Reading from the N-terminus, the 89-residue chain is Small ribosomal subunit protein uS15 (89 aa).

A compositionally biased stretch (basic and acidic residues) spans 1-10 (MSITAEKKQE). Positions 1–24 (MSITAEKKQEVIQSNARAEGDTGS) are disordered.

The protein belongs to the universal ribosomal protein uS15 family. Part of the 30S ribosomal subunit. Forms a bridge to the 50S subunit in the 70S ribosome, contacting the 23S rRNA.

Functionally, one of the primary rRNA binding proteins, it binds directly to 16S rRNA where it helps nucleate assembly of the platform of the 30S subunit by binding and bridging several RNA helices of the 16S rRNA. In terms of biological role, forms an intersubunit bridge (bridge B4) with the 23S rRNA of the 50S subunit in the ribosome. The protein is Small ribosomal subunit protein uS15 of Novosphingobium aromaticivorans (strain ATCC 700278 / DSM 12444 / CCUG 56034 / CIP 105152 / NBRC 16084 / F199).